The following is an 848-amino-acid chain: Probable serine/threonine-protein kinase DDB_G0278535 (848 aa).

Low complexity-rich tracts occupy residues 1–52, 60–85, and 95–116; these read MNKS…NNNH, TAAT…TSST, and TSNS…VSTS. Residues 1-117 form a disordered region; it reads MNKSSSASTV…SSSPQVSTSV (117 aa). 5 ANK repeats span residues 181-212, 218-248, 252-285, 289-320, and 324-353; these read MDQT…KMDI, SGYT…NVNI, DKNS…NVNA, NGET…EVNV, and RGES…DITI. One can recognise an SAM domain in the interval 378 to 441; the sequence is KNVQDIFNWL…IRNCRILRDQ (64 aa). The disordered stretch occupies residues 448–478; that stretch reads NSNVTTGSGSSGSTTTTTTTTTTTSGCGGLN. The span at 452 to 472 shows a compositional bias: low complexity; sequence TTGSGSSGSTTTTTTTTTTTS. Positions 529–799 constitute a Protein kinase domain; that stretch reads LEYTLKLGSG…TLNRLRHEYM (271 aa). Residues 535–543 and lysine 556 each bind ATP; that span reads LGSGSSGKV. The active-site Proton acceptor is the aspartate 650. Positions 810–848 are disordered; it reads RKLPSLSPPPQPTTTTTTTTSSSTSTNNINNNINNNNNT. A compositionally biased stretch (low complexity) spans 822–848; the sequence is TTTTTTTTSSSTSTNNINNNINNNNNT.

This sequence belongs to the protein kinase superfamily. TKL Ser/Thr protein kinase family.

The catalysed reaction is L-seryl-[protein] + ATP = O-phospho-L-seryl-[protein] + ADP + H(+). It carries out the reaction L-threonyl-[protein] + ATP = O-phospho-L-threonyl-[protein] + ADP + H(+). The polypeptide is Probable serine/threonine-protein kinase DDB_G0278535 (Dictyostelium discoideum (Social amoeba)).